Here is a 174-residue protein sequence, read N- to C-terminus: Ribosome maturation factor RimM (174 aa).

In terms of domain architecture, PRC barrel spans 96–169 (EPDTYYDHQL…ILEIDPPDGL (74 aa)).

It belongs to the RimM family. Binds ribosomal protein uS19.

The protein resides in the cytoplasm. In terms of biological role, an accessory protein needed during the final step in the assembly of 30S ribosomal subunit, possibly for assembly of the head region. Essential for efficient processing of 16S rRNA. May be needed both before and after RbfA during the maturation of 16S rRNA. It has affinity for free ribosomal 30S subunits but not for 70S ribosomes. In Mycobacterium marinum (strain ATCC BAA-535 / M), this protein is Ribosome maturation factor RimM.